Consider the following 206-residue polypeptide: Casparian strip membrane protein 1 (206 aa).

Ala-2 is modified (N-acetylalanine). Topologically, residues 2–43 are cytoplasmic; it reads AKESTTIDVGEPSTVTKSSSHVVKDAKKKGFVAVASRGGAKR. The chain crosses the membrane as a helical span at residues 44 to 64; it reads GLAIFDFLLRLAAIAVTIGAA. The Extracellular portion of the chain corresponds to 65–95; sequence SVMYTAEETLPFFTQFLQFQAGYDDLPAFQY. Residues 96–116 traverse the membrane as a helical segment; the sequence is FVIAVAVVASYLVLSLPFSIV. Topologically, residues 117–127 are cytoplasmic; that stretch reads SIVRPHAVAPR. A helical membrane pass occupies residues 128 to 148; that stretch reads LILLICDTLVVTLNTSAAAAA. The Extracellular segment spans residues 149-180; that stretch reads ASITYLAHNGNQSTNWLPICQQFGDFCQNVST. 2 N-linked (GlcNAc...) asparagine glycosylation sites follow: Asn-159 and Asn-177. A helical membrane pass occupies residues 181 to 201; the sequence is AVVADSIAILFFIVLIIISAI. Residues 202–206 are Cytoplasmic-facing; that stretch reads ALKRH.

It belongs to the Casparian strip membrane proteins (CASP) family. In terms of assembly, homodimer and heterodimers with other CASP proteins. Interacts with CASP2, CASP3, CASP4 and CASP5.

Its subcellular location is the cell membrane. Its function is as follows. Regulates membrane-cell wall junctions and localized cell wall deposition. Required for establishment of the Casparian strip membrane domain (CSD) and the subsequent formation of Casparian strips, a cell wall modification of the root endodermis that determines an apoplastic barrier between the intraorganismal apoplasm and the extraorganismal apoplasm and prevents lateral diffusion. The chain is Casparian strip membrane protein 1 (CASP1) from Arabidopsis thaliana (Mouse-ear cress).